The following is a 741-amino-acid chain: Ethylene receptor (741 aa).

3 helical membrane-spanning segments follow: residues Ile23–Val43, Trp53–Leu73, and Val92–Leu112. Cys65 and His69 together coordinate Cu cation. Residues Asp158–Leu307 form the GAF domain. Residues Val350–Glu589 form the Histidine kinase domain. His353 carries the phosphohistidine; by autocatalysis modification. One can recognise a Response regulatory domain in the interval Lys615–Leu732. A 4-aspartylphosphate modification is found at Asp663.

Belongs to the ethylene receptor family. As to quaternary structure, homodimer; disulfide-linked. Cu cation serves as cofactor. In terms of processing, activation probably requires a transfer of a phosphate group between a His in the transmitter domain and an Asp of the receiver domain.

The protein localises to the endoplasmic reticulum membrane. It catalyses the reaction ATP + protein L-histidine = ADP + protein N-phospho-L-histidine.. Functionally, may act early in the ethylene signal transduction pathway, possibly as an ethylene receptor, or as a regulator of the pathway. This chain is Ethylene receptor (ETR1), found in Malus domestica (Apple).